We begin with the raw amino-acid sequence, 180 residues long: Large ribosomal subunit protein uL5 (180 aa).

The protein belongs to the universal ribosomal protein uL5 family. Part of the 50S ribosomal subunit; part of the 5S rRNA/L5/L18/L25 subcomplex. Contacts the 5S rRNA and the P site tRNA. Forms a bridge to the 30S subunit in the 70S ribosome.

In terms of biological role, this is one of the proteins that bind and probably mediate the attachment of the 5S RNA into the large ribosomal subunit, where it forms part of the central protuberance. In the 70S ribosome it contacts protein S13 of the 30S subunit (bridge B1b), connecting the 2 subunits; this bridge is implicated in subunit movement. Contacts the P site tRNA; the 5S rRNA and some of its associated proteins might help stabilize positioning of ribosome-bound tRNAs. This Lactobacillus helveticus (strain DPC 4571) protein is Large ribosomal subunit protein uL5.